Reading from the N-terminus, the 352-residue chain is S-adenosylmethionine:tRNA ribosyltransferase-isomerase (352 aa).

It belongs to the QueA family. As to quaternary structure, monomer.

The protein resides in the cytoplasm. It catalyses the reaction 7-aminomethyl-7-carbaguanosine(34) in tRNA + S-adenosyl-L-methionine = epoxyqueuosine(34) in tRNA + adenine + L-methionine + 2 H(+). Its pathway is tRNA modification; tRNA-queuosine biosynthesis. Transfers and isomerizes the ribose moiety from AdoMet to the 7-aminomethyl group of 7-deazaguanine (preQ1-tRNA) to give epoxyqueuosine (oQ-tRNA). The polypeptide is S-adenosylmethionine:tRNA ribosyltransferase-isomerase (Gloeobacter violaceus (strain ATCC 29082 / PCC 7421)).